The sequence spans 369 residues: Histidinol-phosphate aminotransferase 2 (369 aa).

Position 231 is an N6-(pyridoxal phosphate)lysine (lysine 231).

Belongs to the class-II pyridoxal-phosphate-dependent aminotransferase family. Histidinol-phosphate aminotransferase subfamily. Homodimer. Pyridoxal 5'-phosphate is required as a cofactor.

The catalysed reaction is L-histidinol phosphate + 2-oxoglutarate = 3-(imidazol-4-yl)-2-oxopropyl phosphate + L-glutamate. The protein operates within amino-acid biosynthesis; L-histidine biosynthesis; L-histidine from 5-phospho-alpha-D-ribose 1-diphosphate: step 7/9. This is Histidinol-phosphate aminotransferase 2 from Legionella pneumophila (strain Paris).